Here is a 189-residue protein sequence, read N- to C-terminus: Potassium-transporting ATPase KdpC subunit (189 aa).

The chain crosses the membrane as a helical span at residues 10 to 30 (VIFAMLTLICGVIYPYAITGI).

Belongs to the KdpC family. As to quaternary structure, the system is composed of three essential subunits: KdpA, KdpB and KdpC.

The protein resides in the cell inner membrane. Its function is as follows. Part of the high-affinity ATP-driven potassium transport (or Kdp) system, which catalyzes the hydrolysis of ATP coupled with the electrogenic transport of potassium into the cytoplasm. This subunit acts as a catalytic chaperone that increases the ATP-binding affinity of the ATP-hydrolyzing subunit KdpB by the formation of a transient KdpB/KdpC/ATP ternary complex. In Janthinobacterium sp. (strain Marseille) (Minibacterium massiliensis), this protein is Potassium-transporting ATPase KdpC subunit.